A 260-amino-acid chain; its full sequence is Transcription factor BEE 1 (260 aa).

The disordered stretch occupies residues 118-139; that stretch reads ETGSLRRGKRLKKKKEEEDEKE. In terms of domain architecture, bHLH spans 151–201; that stretch reads QATDSHSLAERVRRGKINERLRCLQDMVPGCYKAMGMATMLDEIINYVQSL.

The protein resides in the nucleus. In terms of biological role, positive regulator of brassinosteroid signaling. This chain is Transcription factor BEE 1 (BEE1), found in Arabidopsis thaliana (Mouse-ear cress).